The primary structure comprises 84 residues: UPF0297 protein Csac_1773 (84 aa).

Belongs to the UPF0297 family.

This chain is UPF0297 protein Csac_1773, found in Caldicellulosiruptor saccharolyticus (strain ATCC 43494 / DSM 8903 / Tp8T 6331).